A 130-amino-acid chain; its full sequence is Histone H2A type 2-B (130 aa).

Residues 1 to 22 (MSGRGKQGGKARAKAKSRSSRA) are disordered. Ser2 is modified (N-acetylserine). Residue Ser2 is modified to Phosphoserine; by RPS6KA5. Position 4 is a citrulline; alternate (Arg4). Arg4 is modified (symmetric dimethylarginine; by PRMT5; alternate). At Lys6 the chain carries N6-(2-hydroxyisobutyryl)lysine. The segment covering 7–19 (QGGKARAKAKSRS) has biased composition (basic residues). Position 10 is an N6-(2-hydroxyisobutyryl)lysine; alternate (Lys10). 2 positions are modified to N6-(beta-hydroxybutyryl)lysine; alternate: Lys10 and Lys14. The residue at position 10 (Lys10) is an N6-lactoyllysine; alternate. The residue at position 10 (Lys10) is an N6-succinyllysine; alternate. A Glycyl lysine isopeptide (Lys-Gly) (interchain with G-Cter in ubiquitin); alternate cross-link involves residue Lys14. Lys16 participates in a covalent cross-link: Glycyl lysine isopeptide (Lys-Gly) (interchain with G-Cter in ubiquitin). The residue at position 37 (Lys37) is an N6-(2-hydroxyisobutyryl)lysine; alternate. At Lys37 the chain carries N6-(beta-hydroxybutyryl)lysine; alternate. Lys37 is modified (N6-crotonyllysine; alternate). Residues Lys75 and Lys76 each carry the N6-(2-hydroxyisobutyryl)lysine modification. Lys96 carries the N6-(2-hydroxyisobutyryl)lysine; alternate modification. Lys96 is subject to N6-(beta-hydroxybutyryl)lysine; alternate. Lys96 carries the N6-succinyllysine; alternate modification. Lys96 is subject to N6-glutaryllysine; alternate. Residue Gln105 is modified to N5-methylglutamine. The residue at position 119 (Lys119) is an N6-(2-hydroxyisobutyryl)lysine; alternate. Residue Lys119 is modified to N6-(beta-hydroxybutyryl)lysine; alternate. N6-crotonyllysine; alternate occurs at positions 119 and 120. Lys119 and Lys120 each carry N6-glutaryllysine; alternate. Lys120 participates in a covalent cross-link: Glycyl lysine isopeptide (Lys-Gly) (interchain with G-Cter in ubiquitin); alternate. Thr121 carries the post-translational modification Phosphothreonine; by DCAF1.

The protein belongs to the histone H2A family. In terms of assembly, the nucleosome is a histone octamer containing two molecules each of H2A, H2B, H3 and H4 assembled in one H3-H4 heterotetramer and two H2A-H2B heterodimers. The octamer wraps approximately 147 bp of DNA. Post-translationally, deiminated on Arg-4 in granulocytes upon calcium entry. In terms of processing, monoubiquitination of Lys-120 (H2AK119Ub) by RING1, TRIM37 and RNF2/RING2 complex gives a specific tag for epigenetic transcriptional repression and participates in X chromosome inactivation of female mammals. It is involved in the initiation of both imprinted and random X inactivation. Ubiquitinated H2A is enriched in inactive X chromosome chromatin. Ubiquitination of H2A functions downstream of methylation of 'Lys-27' of histone H3 (H3K27me). H2AK119Ub by RNF2/RING2 can also be induced by ultraviolet and may be involved in DNA repair. Monoubiquitination of Lys-120 (H2AK119Ub) by TRIM37 may promote transformation of cells in a number of breast cancers. Following DNA double-strand breaks (DSBs), it is ubiquitinated through 'Lys-63' linkage of ubiquitin moieties by the E2 ligase UBE2N and the E3 ligases RNF8 and RNF168, leading to the recruitment of repair proteins to sites of DNA damage. Ubiquitination at Lys-14 and Lys-16 (H2AK13Ub and H2AK15Ub, respectively) in response to DNA damage is initiated by RNF168 that mediates monoubiquitination at these 2 sites, and 'Lys-63'-linked ubiquitin are then conjugated to monoubiquitin; RNF8 is able to extend 'Lys-63'-linked ubiquitin chains in vitro. Deubiquitinated by USP51 at Lys-14 and Lys-16 (H2AK13Ub and H2AK15Ub, respectively) after damaged DNA is repaired. H2AK119Ub and ionizing radiation-induced 'Lys-63'-linked ubiquitination (H2AK13Ub and H2AK15Ub) are distinct events. Phosphorylation on Ser-2 (H2AS1ph) is enhanced during mitosis. Phosphorylation on Ser-2 by RPS6KA5/MSK1 directly represses transcription. Acetylation of H3 inhibits Ser-2 phosphorylation by RPS6KA5/MSK1. Phosphorylation at Thr-121 (H2AT120ph) by DCAF1 is present in the regulatory region of many tumor suppresor genes and down-regulates their transcription. Post-translationally, symmetric dimethylation on Arg-4 by the PRDM1/PRMT5 complex may play a crucial role in the germ-cell lineage. In terms of processing, glutamine methylation at Gln-105 (H2AQ104me) by FBL is specifically dedicated to polymerase I. It is present at 35S ribosomal DNA locus and impairs binding of the FACT complex. Crotonylation (Kcr) is specifically present in male germ cells and marks testis-specific genes in post-meiotic cells, including X-linked genes that escape sex chromosome inactivation in haploid cells. Crotonylation marks active promoters and enhancers and confers resistance to transcriptional repressors. It is also associated with post-meiotically activated genes on autosomes. Post-translationally, lactylated in macrophages by EP300/P300 by using lactoyl-CoA directly derived from endogenous or exogenous lactate, leading to stimulates gene transcription.

The protein resides in the nucleus. Its subcellular location is the chromosome. Its function is as follows. Core component of nucleosome. Nucleosomes wrap and compact DNA into chromatin, limiting DNA accessibility to the cellular machineries which require DNA as a template. Histones thereby play a central role in transcription regulation, DNA repair, DNA replication and chromosomal stability. DNA accessibility is regulated via a complex set of post-translational modifications of histones, also called histone code, and nucleosome remodeling. This Homo sapiens (Human) protein is Histone H2A type 2-B.